The chain runs to 481 residues: Thyroid receptor-interacting protein 6 (481 aa).

Residues 1-12 are compositionally biased toward pro residues; that stretch reads MSGPTWLPPKQP. Residues 1 to 259 form a disordered region; sequence MSGPTWLPPK…QVPLSQPPEE (259 aa). At Arg25 the chain carries Asymmetric dimethylarginine; alternate. Arg25 carries the post-translational modification Omega-N-methylarginine; alternate. Tyr55 bears the Phosphotyrosine; by SRC mark. The residue at position 92 (Ser92) is a Phosphoserine. The span at 108–122 shows a compositional bias: basic and acidic residues; it reads DGGRGHAPRRPDRQA. Arg111 bears the Omega-N-methylarginine mark. Composition is skewed to low complexity over residues 153-173 and 183-193; these read SPYG…AGPA and PVRGCGPPRRG. Arg185 and Arg192 each carry omega-N-methylarginine. Ser195 bears the Phosphoserine mark. Arg211 is modified (omega-N-methylarginine). Over residues 221–233 the composition is skewed to basic and acidic residues; it reads SHREPGPGVKEEA. Position 243 is an omega-N-methylarginine (Arg243). Ser254 is subject to Phosphoserine. LIM zinc-binding domains follow at residues 284–321, 344–403, and 404–472; these read CGGC…QLRG, CSTC…FAPR, and CSVC…RIQE. The interval 474–481 is interaction with MAGI1 and PTPN13; the sequence is SATVTTDC.

This sequence belongs to the zyxin/ajuba family. In terms of assembly, specifically interacts with the ligand binding domain of the thyroid receptor (TR) in the presence of thyroid hormone. Interacts (via the third LIM domain and C-terminus) with PTPN13 (via the second PDZ domain). Interacts (via the second LIM domain or via the third LIM domain plus C-terminus) with PDLIM4 (via PDZ domain). Found in a complex with PTPN13 and PDLIM4. Interacts with SVIL isoform 2. Interacts with LPAR2 but not other LPA receptors. Interacts with PRKAA2. Interacts with MAGI1. Interacts with SCRIB. In terms of processing, phosphorylation at Tyr-55 by SRC is required for enhancement of lysophosphatidic acid-induced cell migration. Tyr-55 is dephosphorylated by PTPN13.

It localises to the cytoplasm. Its subcellular location is the cytoskeleton. It is found in the cell junction. The protein localises to the focal adhesion. The protein resides in the nucleus. Relays signals from the cell surface to the nucleus to weaken adherens junction and promote actin cytoskeleton reorganization and cell invasiveness. Involved in lysophosphatidic acid-induced cell adhesion and migration. Acts as a transcriptional coactivator for NF-kappa-B and JUN, and mediates the transrepression of these transcription factors induced by glucocorticoid receptor. The protein is Thyroid receptor-interacting protein 6 (TRIP6) of Bos taurus (Bovine).